The sequence spans 372 residues: Lipid-A-disaccharide synthase (372 aa).

The protein belongs to the LpxB family.

The enzyme catalyses a lipid X + a UDP-2-N,3-O-bis[(3R)-3-hydroxyacyl]-alpha-D-glucosamine = a lipid A disaccharide + UDP + H(+). Its pathway is bacterial outer membrane biogenesis; LPS lipid A biosynthesis. Functionally, condensation of UDP-2,3-diacylglucosamine and 2,3-diacylglucosamine-1-phosphate to form lipid A disaccharide, a precursor of lipid A, a phosphorylated glycolipid that anchors the lipopolysaccharide to the outer membrane of the cell. The sequence is that of Lipid-A-disaccharide synthase from Thiobacillus denitrificans (strain ATCC 25259 / T1).